The chain runs to 321 residues: UDP-3-O-acylglucosamine N-acyltransferase (321 aa).

The Proton acceptor role is filled by His231.

The protein belongs to the transferase hexapeptide repeat family. LpxD subfamily. As to quaternary structure, homotrimer.

The catalysed reaction is a UDP-3-O-[(3R)-3-hydroxyacyl]-alpha-D-glucosamine + a (3R)-hydroxyacyl-[ACP] = a UDP-2-N,3-O-bis[(3R)-3-hydroxyacyl]-alpha-D-glucosamine + holo-[ACP] + H(+). Its pathway is bacterial outer membrane biogenesis; LPS lipid A biosynthesis. In terms of biological role, catalyzes the N-acylation of UDP-3-O-acylglucosamine using 3-hydroxyacyl-ACP as the acyl donor. Is involved in the biosynthesis of lipid A, a phosphorylated glycolipid that anchors the lipopolysaccharide to the outer membrane of the cell. The sequence is that of UDP-3-O-acylglucosamine N-acyltransferase from Campylobacter jejuni subsp. jejuni serotype O:2 (strain ATCC 700819 / NCTC 11168).